Here is a 1345-residue protein sequence, read N- to C-terminus: DNA-directed RNA polymerase subunit beta (1345 aa).

It belongs to the RNA polymerase beta chain family. The RNAP catalytic core consists of 2 alpha, 1 beta, 1 beta' and 1 omega subunit. When a sigma factor is associated with the core the holoenzyme is formed, which can initiate transcription.

It catalyses the reaction RNA(n) + a ribonucleoside 5'-triphosphate = RNA(n+1) + diphosphate. In terms of biological role, DNA-dependent RNA polymerase catalyzes the transcription of DNA into RNA using the four ribonucleoside triphosphates as substrates. This is DNA-directed RNA polymerase subunit beta from Shewanella sp. (strain MR-4).